Consider the following 454-residue polypeptide: Bifunctional protein GlmU (454 aa).

Residues 1–228 are pyrophosphorylase; that stretch reads MNKCAIILAA…FEETLGVNSR (228 aa). Residues 8-11, lysine 22, glutamine 73, and 78-79 each bind UDP-N-acetyl-alpha-D-glucosamine; these read LAAG and GT. Mg(2+) is bound at residue aspartate 103. UDP-N-acetyl-alpha-D-glucosamine contacts are provided by glycine 140, glutamate 154, asparagine 169, and asparagine 226. Asparagine 226 contributes to the Mg(2+) binding site. Positions 229 to 249 are linker; sequence AELAKVESIMRNRINRTHLDN. The segment at 250 to 454 is N-acetyltransferase; the sequence is GVTIIDPLNT…EGWVERKKLK (205 aa). Positions 331 and 349 each coordinate UDP-N-acetyl-alpha-D-glucosamine. The active-site Proton acceptor is histidine 361. The UDP-N-acetyl-alpha-D-glucosamine site is built by tyrosine 364 and asparagine 375. Residues 384 to 385, alanine 421, and arginine 438 each bind acetyl-CoA; that span reads NY.

The protein in the N-terminal section; belongs to the N-acetylglucosamine-1-phosphate uridyltransferase family. It in the C-terminal section; belongs to the transferase hexapeptide repeat family. Homotrimer. It depends on Mg(2+) as a cofactor.

The protein localises to the cytoplasm. The catalysed reaction is alpha-D-glucosamine 1-phosphate + acetyl-CoA = N-acetyl-alpha-D-glucosamine 1-phosphate + CoA + H(+). It catalyses the reaction N-acetyl-alpha-D-glucosamine 1-phosphate + UTP + H(+) = UDP-N-acetyl-alpha-D-glucosamine + diphosphate. The protein operates within nucleotide-sugar biosynthesis; UDP-N-acetyl-alpha-D-glucosamine biosynthesis; N-acetyl-alpha-D-glucosamine 1-phosphate from alpha-D-glucosamine 6-phosphate (route II): step 2/2. Its pathway is nucleotide-sugar biosynthesis; UDP-N-acetyl-alpha-D-glucosamine biosynthesis; UDP-N-acetyl-alpha-D-glucosamine from N-acetyl-alpha-D-glucosamine 1-phosphate: step 1/1. It functions in the pathway bacterial outer membrane biogenesis; LPS lipid A biosynthesis. Functionally, catalyzes the last two sequential reactions in the de novo biosynthetic pathway for UDP-N-acetylglucosamine (UDP-GlcNAc). The C-terminal domain catalyzes the transfer of acetyl group from acetyl coenzyme A to glucosamine-1-phosphate (GlcN-1-P) to produce N-acetylglucosamine-1-phosphate (GlcNAc-1-P), which is converted into UDP-GlcNAc by the transfer of uridine 5-monophosphate (from uridine 5-triphosphate), a reaction catalyzed by the N-terminal domain. The protein is Bifunctional protein GlmU of Clostridium perfringens (strain ATCC 13124 / DSM 756 / JCM 1290 / NCIMB 6125 / NCTC 8237 / Type A).